The chain runs to 49 residues: Large ribosomal subunit protein bL33B (49 aa).

Belongs to the bacterial ribosomal protein bL33 family.

This is Large ribosomal subunit protein bL33B from Limosilactobacillus reuteri subsp. reuteri (strain JCM 1112) (Lactobacillus reuteri).